The primary structure comprises 272 residues: Putative hydro-lyase Rpal_1947 (272 aa).

The protein belongs to the D-glutamate cyclase family.

In Rhodopseudomonas palustris (strain TIE-1), this protein is Putative hydro-lyase Rpal_1947.